A 456-amino-acid polypeptide reads, in one-letter code: Protein shifted (456 aa).

The N-terminal stretch at 1–30 is a signal peptide; that stretch reads MTHQGIGCLVKWLYLVLIVHTLLCIGQLEC. The interval 34 to 112 is disordered; it reads HHNRNNNNNN…GGGGSRHNRN (79 aa). Positions 44–55 are enriched in basic and acidic residues; it reads RRADSSSSEEGH. Asn57 carries N-linked (GlcNAc...) asparagine glycosylation. Residues 77–87 show a composition bias toward basic residues; that stretch reads HQPRRGQRKKQ. The span at 88-107 shows a compositional bias: gly residues; sequence QGGGGGGSGGGGGNGGGGGS. A WIF domain is found at 119–261; that stretch reads LWINEQQLKM…PIRLNFKKEC (143 aa). N-linked (GlcNAc...) asparagine glycans are attached at residues Asn173, Asn217, and Asn227. 16 disulfide bridges follow: Cys224-Cys261, Cys283-Cys293, Cys287-Cys299, Cys301-Cys310, Cys315-Cys325, Cys319-Cys331, Cys333-Cys342, Cys347-Cys357, Cys351-Cys363, Cys365-Cys374, Cys379-Cys389, Cys383-Cys395, Cys397-Cys406, Cys416-Cys423, Cys418-Cys429, and Cys431-Cys440. 5 EGF-like domains span residues 279–311, 315–342, 343–375, 376–407, and 412–441; these read TLQE…QYCE, CFPQ…GTQC, EGGI…LRCE, YSKC…DHCE, and QRSI…RHCN. N-linked (GlcNAc...) asparagine glycosylation occurs at Asn324. Asn420 carries an N-linked (GlcNAc...) asparagine glycan.

As to quaternary structure, interacts with hh. In terms of tissue distribution, at the blastoderm stage, it is ubiquitously expressed. As embryogenesis continues, it is expressed in the epidermis and central nervous system, this expression being segmentally modulated. Also highly expressed at the foregut and hindgut throughout embryogenesis. In third instar wing imaginal disks, it is highly expressed in the most anterior and posterior parts of the disk and weakly expressed at the antero/posterior (A/P) compartment border. In the leg disks and the antenna part of the eye-antennal imaginal disk it is also weakly expressed at the A/P compartment border. Weakly expressed in the morphogenetic furrow in the eye primordium.

It is found in the secreted. The protein resides in the extracellular space. The protein localises to the extracellular matrix. Required for normal accumulation and movement of lipid-modified hedgehog (hh) morphogen. May act by stabilizing the interaction between heparan sulfate proteoglycans (HSPGs) and hh, HSPGs being required for diffusion of hh morphogen. Not involved in wingless (wg) morphogen movement, suggesting that it may provide HSPG specificity for Hh. The polypeptide is Protein shifted (shf) (Drosophila melanogaster (Fruit fly)).